Reading from the N-terminus, the 248-residue chain is Ankyrin repeat domain-containing protein 45 (248 aa).

Composition is skewed to acidic residues over residues 1-10 and 22-33; these read MEPEETLESE and EYEESQEAEETG. A disordered region spans residues 1-42; sequence MEPEETLESESSEKSLFSSQQEYEESQEAEETGAENPLLQPT. ANK repeat units follow at residues 75–104 and 108–137; these read VGRN…NLNE and RGYT…DIEA.

It is found in the cytoplasm. It localises to the midbody. The protein localises to the midbody ring. Its subcellular location is the cleavage furrow. Functionally, may play a role during cell division. The sequence is that of Ankyrin repeat domain-containing protein 45 (Ankrd45) from Mus musculus (Mouse).